The following is a 529-amino-acid chain: Bifunctional purine biosynthesis protein PurH (529 aa).

In terms of domain architecture, MGS-like spans 1-148 (MQQRRPVRRA…KNHKDVAIVV (148 aa)). The residue at position 287 (K287) is an N6-acetyllysine.

The protein belongs to the PurH family.

The enzyme catalyses (6R)-10-formyltetrahydrofolate + 5-amino-1-(5-phospho-beta-D-ribosyl)imidazole-4-carboxamide = 5-formamido-1-(5-phospho-D-ribosyl)imidazole-4-carboxamide + (6S)-5,6,7,8-tetrahydrofolate. It carries out the reaction IMP + H2O = 5-formamido-1-(5-phospho-D-ribosyl)imidazole-4-carboxamide. It functions in the pathway purine metabolism; IMP biosynthesis via de novo pathway; 5-formamido-1-(5-phospho-D-ribosyl)imidazole-4-carboxamide from 5-amino-1-(5-phospho-D-ribosyl)imidazole-4-carboxamide (10-formyl THF route): step 1/1. The protein operates within purine metabolism; IMP biosynthesis via de novo pathway; IMP from 5-formamido-1-(5-phospho-D-ribosyl)imidazole-4-carboxamide: step 1/1. This Escherichia coli O17:K52:H18 (strain UMN026 / ExPEC) protein is Bifunctional purine biosynthesis protein PurH.